Reading from the N-terminus, the 222-residue chain is Ornithine decarboxylase antizyme 1 (222 aa).

It belongs to the ODC antizyme family. In terms of assembly, interacts with ODC1 and thereby sterically blocks ODC homodimerization. Forms a ternary complex with PSMB4 and OAZ1 before PSMB4 is incorporated into the 20S proteasome. Interacts with AZIN2; this interaction disrupts the interaction between the antizyme and ODC1. Interacts with FAM171A1.

Ornithine decarboxylase (ODC) antizyme protein that negatively regulates ODC activity and intracellular polyamine biosynthesis and uptake in response to increased intracellular polyamine levels. Binds to ODC monomers, inhibiting the assembly of the functional ODC homodimer, and targets the monomers for ubiquitin-independent proteolytic destruction by the 26S proteasome. Triggers ODC degradation by inducing the exposure of a cryptic proteasome-interacting surface of ODC. Stabilizes AZIN2 by interfering with its ubiquitination. Also inhibits cellular uptake of polyamines by inactivating the polyamine uptake transporter. SMAD1/OAZ1/PSMB4 complex mediates the degradation of the CREBBP/EP300 repressor SNIP1. Involved in the translocation of AZIN2 from ER-Golgi intermediate compartment (ERGIC) to the cytosol. The polypeptide is Ornithine decarboxylase antizyme 1 (OAZ1) (Mesocricetus auratus (Golden hamster)).